Reading from the N-terminus, the 294-residue chain is 33 kDa chaperonin (294 aa).

Cystine bridges form between Cys-238–Cys-240 and Cys-271–Cys-274.

The protein belongs to the HSP33 family. Under oxidizing conditions two disulfide bonds are formed involving the reactive cysteines. Under reducing conditions zinc is bound to the reactive cysteines and the protein is inactive.

Its subcellular location is the cytoplasm. Its function is as follows. Redox regulated molecular chaperone. Protects both thermally unfolding and oxidatively damaged proteins from irreversible aggregation. Plays an important role in the bacterial defense system toward oxidative stress. The polypeptide is 33 kDa chaperonin (Thermoanaerobacter pseudethanolicus (strain ATCC 33223 / 39E) (Clostridium thermohydrosulfuricum)).